A 75-amino-acid chain; its full sequence is Metallothionein-like protein 1 (75 aa).

Belongs to the metallothionein superfamily. Type 15 family.

Its function is as follows. Metallothioneins have a high content of cysteine residues that bind various heavy metals. The chain is Metallothionein-like protein 1 (ALI1) from Triticum aestivum (Wheat).